The sequence spans 489 residues: Serine/threonine-protein kinase BSK2 (489 aa).

Residues 1-30 are disordered; it reads MGCLHSKTANLPSSDDPSAPNKPESVNGDQ. Residue G2 is the site of N-myristoyl glycine attachment. Polar residues predominate over residues 7 to 16; the sequence is KTANLPSSDD. Positions 56–322 constitute a Protein kinase domain; sequence SCIVSEGGEK…QEEVASHVLM (267 aa). ATP is bound by residues 62–70 and K84; that span reads GGEKAPNVV. Catalysis depends on D178, which acts as the Proton acceptor.

The protein belongs to the protein kinase superfamily. Ser/Thr protein kinase family. Post-translationally, phosphorylated by BRI1 upon brassinolide (BL) treatment.

Its subcellular location is the cell membrane. The enzyme catalyses L-seryl-[protein] + ATP = O-phospho-L-seryl-[protein] + ADP + H(+). It carries out the reaction L-threonyl-[protein] + ATP = O-phospho-L-threonyl-[protein] + ADP + H(+). Its function is as follows. Probable serine/threonine kinase that acts as a positive regulator of brassinosteroid (BR) signaling downstream of the receptor kinase BRI1. Mediates signal transduction from BRI1 by functioning as substrate of BRI1. The polypeptide is Serine/threonine-protein kinase BSK2 (Arabidopsis thaliana (Mouse-ear cress)).